The chain runs to 554 residues: MTFSVPTQGKAFANISFLPYGVGPRDGGICLELHLGPYRILLDCGLEDLTPLLAADPGTVDLVFCSHAHRDHGLGLWQFHQQFPHIPILASEVTQRLLPLNWPDEFVPPFCRVLPWRSPQEVLPGLTVELLPAGHLPGAALILLEYHNGDRLYRVIYTGDYCLSHLQLVDGLALTPLRGLKPDVLILEGHYGNRRLPHRRQQEKQFIQAIETVLAKGRNILLPVPPLGLAQEILKLLRTHHQFTGRQVNLWAGESVARGCDAYQGIIDHLPDNVRNFAQHQPLFWDDKVYPHLRPLTDDQGELSLSAPSIVITTTWPAFWPSPAALPGLWTVFMPQLLTLPSCLVNFAWQDLEEFPKYELEDYLLADHSDGRNTTQLIHNLRPQHLVFVHGQPSDIEDLTSLEELQSRYQLHSPAAGNAVALPIGDRFVQPTPPPPQIYEGEIHELEPNKQIHHLGEVVIHLDGQILENSRWGKFGETGIVQARWQGEELVLRGISQRELLKQNQSSKRPVDFDCCANCRHFQHYHCRNPVSPLMGLEVRADGHCPVFESVASS.

The protein to M.jannaschii MJ0047, MJ0162 and MJ1236.

This is an uncharacterized protein from Synechocystis sp. (strain ATCC 27184 / PCC 6803 / Kazusa).